The following is a 461-amino-acid chain: V-type ATP synthase beta chain (461 aa).

The protein belongs to the ATPase alpha/beta chains family.

Its function is as follows. Produces ATP from ADP in the presence of a proton gradient across the membrane. The V-type beta chain is a regulatory subunit. The chain is V-type ATP synthase beta chain from Streptococcus pneumoniae serotype 19F (strain G54).